The primary structure comprises 384 residues: uncharacterized protein (384 aa).

Residues 1–116 (MTEMPKKKFS…FPAAPPPMDS (116 aa)) are disordered. Basic and acidic residues-rich tracts occupy residues 14 to 70 (ARGD…RAGD) and 78 to 95 (RFKDKDRDKPRYGDDRPR). S-adenosyl-L-methionine contacts are provided by glycine 318, isoleucine 338, and leucine 347.

Belongs to the class IV-like SAM-binding methyltransferase superfamily. RNA methyltransferase TrmH family.

This is an uncharacterized protein from Synechocystis sp. (strain ATCC 27184 / PCC 6803 / Kazusa).